A 134-amino-acid chain; its full sequence is Large ribosomal subunit protein bL20 (134 aa).

This sequence belongs to the bacterial ribosomal protein bL20 family.

Functionally, binds directly to 23S ribosomal RNA and is necessary for the in vitro assembly process of the 50S ribosomal subunit. It is not involved in the protein synthesizing functions of that subunit. The polypeptide is Large ribosomal subunit protein bL20 (Sinorhizobium fredii (strain NBRC 101917 / NGR234)).